Consider the following 993-residue polypeptide: ATP-dependent DNA helicase MPH1 (993 aa).

The Helicase ATP-binding domain occupies 94–261 (IVHKSLFQNT…EVVNNLDISK (168 aa)). Position 107-114 (107-114 (IPTGMGKT)) interacts with ATP. Residues 209-212 (DEAH) carry the DEAH box motif. In terms of domain architecture, Helicase C-terminal spans 507–655 (KVERLHRQEQ…CIDYKKSDRI (149 aa)). Residues 530–551 (NDKLERSARRTGSSEEAQISGM) are disordered. The segment covering 539 to 551 (RTGSSEEAQISGM) has biased composition (polar residues).

This sequence belongs to the DEAD box helicase family. DEAH subfamily. FANCM sub-subfamily. In terms of assembly, interacts with the MHF histone-fold complex to form the FANCM-MHF complex.

It localises to the nucleus. It carries out the reaction ATP + H2O = ADP + phosphate + H(+). Functionally, ATP-dependent DNA helicase involved in DNA damage repair by homologous recombination and in genome maintenance. Capable of unwinding D-loops. Plays a role in limiting crossover recombinants during mitotic DNA double-strand break (DSB) repair. Component of a FANCM-MHF complex which promotes gene conversion at blocked replication forks, probably by reversal of the stalled fork. This is ATP-dependent DNA helicase MPH1 from Saccharomyces cerevisiae (strain YJM789) (Baker's yeast).